Consider the following 41-residue polypeptide: Large ribosomal subunit protein bL36 (41 aa).

Belongs to the bacterial ribosomal protein bL36 family.

The sequence is that of Large ribosomal subunit protein bL36 from Xylella fastidiosa (strain M23).